The primary structure comprises 455 residues: Deoxyribodipyrimidine photo-lyase (455 aa).

The 130-residue stretch at 2–131 (SVAVVLFTSD…ELHVHDAVVT (130 aa)) folds into the Photolyase/cryptochrome alpha/beta domain. Residues Tyr-219 and 231-235 (TSRLS) each bind FAD. 2 interaction with DNA regions span residues 266–273 (QLAWRDFH) and 330–331 (NR). 361-363 (DGD) is an FAD binding site. DNA is bound at residue Gln-392.

This sequence belongs to the DNA photolyase class-1 family. Monomer. FAD is required as a cofactor. Requires coenzyme F420-(gamma-Glu)n as cofactor.

It catalyses the reaction cyclobutadipyrimidine (in DNA) = 2 pyrimidine residues (in DNA).. Its function is as follows. Involved in repair of UV radiation-induced DNA damage. Catalyzes the light-dependent monomerization (300-600 nm) of cyclobutyl pyrimidine dimers (in cis-syn configuration), which are formed between adjacent bases on the same DNA strand upon exposure to ultraviolet radiation. In Streptomyces griseus, this protein is Deoxyribodipyrimidine photo-lyase (phr).